A 263-amino-acid polypeptide reads, in one-letter code: MEYLKRLALLISVIILTIFIMGCDSQSDTAENPKEGSKEAQIKKSFSKTLDMYPIKNLEDFYGKEGYRDGEFKKDDKGTWLIRSEIVKQPKGKVMKTRGMQLYINRNTETAKGFFVLKEISENNNRVNKDKEEKYEVKMVGNKIIPTEQINDEKIKKEIENFKFFVQYGNFKNFEKYNNGEFSYNPEAPIYSAKYQLHNDDYNVRQLRKRYDISTKETPKLLLKGGGDLKNSSVGQNDIEFTFVERKGENIYFNDSVEFIPSK.

An N-terminal signal peptide occupies residues 1–22 (MEYLKRLALLISVIILTIFIMG). The N-palmitoyl cysteine moiety is linked to residue Cys-23. Cys-23 is lipidated: S-diacylglycerol cysteine.

The protein belongs to the staphylococcal tandem lipoprotein family.

It localises to the cell membrane. This is an uncharacterized protein from Staphylococcus aureus (strain USA300).